Reading from the N-terminus, the 237-residue chain is Lipid A 1-diphosphate synthase (237 aa).

Over 1 to 5 the chain is Cytoplasmic; the sequence is MIKNL. A helical membrane pass occupies residues 6–26; it reads PQIVLLNIVGLALFLSWYIPV. Residues 27-62 lie on the Periplasmic side of the membrane; it reads NHGFWLPIDADIFYFFNQKLVESKAFLWLVALTNNR. A helical membrane pass occupies residues 63–83; that stretch reads AFDGCSLLAMGMLMLSFWLKE. Residues 84–90 lie on the Cytoplasmic side of the membrane; the sequence is NAPGRRR. The chain crosses the membrane as a helical span at residues 91-111; it reads IVIIGLVMLLTAVVLNQLGQA. The Periplasmic portion of the chain corresponds to 112–145; that stretch reads LIPVKRASPTLTFTDINRVSELLSVPTKDASRDS. A topological domain (cytoplasmic) is located at residue Lys-167. Residues 168-188 form a helical membrane-spanning segment; that stretch reads VAGLIALIIFVVFAFPRVMIG. Residues 189-194 are Periplasmic-facing; that stretch reads AHWFTD. A helical transmembrane segment spans residues 195–215; the sequence is IIVGSMTVILIGLPWVLLTPL. The Cytoplasmic portion of the chain corresponds to 216–237; sequence SDRLITFFDKSLPGKNKHFQNK.

It belongs to the LpxT phosphotransferase family.

It localises to the cell inner membrane. The catalysed reaction is di-trans,octa-cis-undecaprenyl diphosphate + alpha-Kdo-(2-&gt;4)-alpha-Kdo-(2-&gt;6)-lipid A (E. coli) = (Kdo)2-lipid A 1-diphosphate + di-trans,octa-cis-undecaprenyl phosphate. It functions in the pathway bacterial outer membrane biogenesis; lipopolysaccharide biosynthesis. Inhibited by BasR. This regulation does not occur at the level of transcription, but rather following the assembly of LpxT into the inner membrane. Its function is as follows. Involved in the modification of the lipid A domain of lipopolysaccharides (LPS). Transfers a phosphate group from undecaprenyl pyrophosphate (C55-PP) to lipid A to form lipid A 1-diphosphate. Contributes to the recycling of undecaprenyl phosphate (C55-P). In vitro, has low undecaprenyl-diphosphate phosphatase activity. The sequence is that of Lipid A 1-diphosphate synthase from Escherichia coli (strain K12).